We begin with the raw amino-acid sequence, 212 residues long: Ribonuclease HII (212 aa).

An RNase H type-2 domain is found at 1–204 (MRVGIDEAGR…LRSTAPLYYI (204 aa)). Residues Asp-6, Glu-7, and Asp-103 each coordinate a divalent metal cation.

The protein belongs to the RNase HII family. Mn(2+) serves as cofactor. It depends on Mg(2+) as a cofactor.

It is found in the cytoplasm. The catalysed reaction is Endonucleolytic cleavage to 5'-phosphomonoester.. Functionally, endonuclease that specifically degrades the RNA of RNA-DNA hybrids. The protein is Ribonuclease HII of Saccharolobus solfataricus (strain ATCC 35092 / DSM 1617 / JCM 11322 / P2) (Sulfolobus solfataricus).